Here is a 702-residue protein sequence, read N- to C-terminus: Elongation factor G (702 aa).

Positions Ala-8 to Thr-290 constitute a tr-type G domain. GTP is bound by residues Ala-17–Thr-24, Asp-88–His-92, and Asn-142–Asp-145.

The protein belongs to the TRAFAC class translation factor GTPase superfamily. Classic translation factor GTPase family. EF-G/EF-2 subfamily.

The protein localises to the cytoplasm. In terms of biological role, catalyzes the GTP-dependent ribosomal translocation step during translation elongation. During this step, the ribosome changes from the pre-translocational (PRE) to the post-translocational (POST) state as the newly formed A-site-bound peptidyl-tRNA and P-site-bound deacylated tRNA move to the P and E sites, respectively. Catalyzes the coordinated movement of the two tRNA molecules, the mRNA and conformational changes in the ribosome. The polypeptide is Elongation factor G (Photorhabdus laumondii subsp. laumondii (strain DSM 15139 / CIP 105565 / TT01) (Photorhabdus luminescens subsp. laumondii)).